Consider the following 176-residue polypeptide: 3-hydroxyanthranilate 3,4-dioxygenase (176 aa).

O2 is bound at residue arginine 44. Residues histidine 48, glutamate 54, and histidine 92 each contribute to the Fe cation site. Glutamate 54 provides a ligand contact to substrate. 2 residues coordinate substrate: arginine 96 and glutamate 106. Fe cation is bound by residues cysteine 121, cysteine 124, cysteine 158, and cysteine 161.

The protein belongs to the 3-HAO family. Homodimer. Fe(2+) is required as a cofactor.

The enzyme catalyses 3-hydroxyanthranilate + O2 = (2Z,4Z)-2-amino-3-carboxymuconate 6-semialdehyde. It functions in the pathway cofactor biosynthesis; NAD(+) biosynthesis; quinolinate from L-kynurenine: step 3/3. Its function is as follows. Catalyzes the oxidative ring opening of 3-hydroxyanthranilate to 2-amino-3-carboxymuconate semialdehyde, which spontaneously cyclizes to quinolinate. In Xanthomonas campestris pv. campestris (strain B100), this protein is 3-hydroxyanthranilate 3,4-dioxygenase.